The following is a 598-amino-acid chain: Aspartate--tRNA ligase (598 aa).

Position 173 (Glu-173) interacts with L-aspartate. Residues 197-200 are aspartate; sequence QLFK. Arg-219 lines the L-aspartate pocket. Residues 219–221 and Gln-228 each bind ATP; that span reads RDE. His-449 contributes to the L-aspartate binding site. An ATP-binding site is contributed by Glu-483. Arg-490 is an L-aspartate binding site. 535–538 contributes to the ATP binding site; the sequence is GLDR.

It belongs to the class-II aminoacyl-tRNA synthetase family. Type 1 subfamily. Homodimer.

It is found in the cytoplasm. It catalyses the reaction tRNA(Asp) + L-aspartate + ATP = L-aspartyl-tRNA(Asp) + AMP + diphosphate. Catalyzes the attachment of L-aspartate to tRNA(Asp) in a two-step reaction: L-aspartate is first activated by ATP to form Asp-AMP and then transferred to the acceptor end of tRNA(Asp). The chain is Aspartate--tRNA ligase from Shewanella halifaxensis (strain HAW-EB4).